A 239-amino-acid chain; its full sequence is Small ribosomal subunit protein uS2c (239 aa).

This sequence belongs to the universal ribosomal protein uS2 family.

It is found in the plastid. Its subcellular location is the organellar chromatophore. This is Small ribosomal subunit protein uS2c (rps2) from Paulinella chromatophora.